The following is a 2061-amino-acid chain: Myoferlin (2061 aa).

The C2 1 domain occupies 1–101; it reads MLRVIVESAS…TGDQSRSLPY (101 aa). Topologically, residues 1-2025 are cytoplasmic; it reads MLRVIVESAS…MKFIVWRRFK (2025 aa). A disordered region spans residues 123 to 172; it reads GYDPPSAPHPNDLSGPSVPGMGGDGEEDEGDEDRLDNAVRGPGPKGPVGT. Residues 146-156 are compositionally biased toward acidic residues; sequence DGEEDEGDEDR. Ser-174 carries the phosphoserine modification. C2 domains are found at residues 181–300 and 339–474; these read RLTK…RKWL and DSDD…VEDF. The necessary for interaction with EHD2 stretch occupies residues 186-281; sequence KNSRRMLSNK…RADCLMGEFK (96 aa). The segment at 323–342 is disordered; sequence LGTGDEPPPERRDRDNDSDD. Ca(2+)-binding residues include Asp-390, Asp-396, Asp-444, Asp-446, and Asp-452. Lys-553 carries the N6-acetyllysine modification. Ser-729 bears the Phosphoserine mark. At Lys-884 the chain carries N6-acetyllysine. Residues 938–967 form a disordered region; sequence ESRYPGGDWKPAEDTYTDANGDKAASPSEL. 2 consecutive C2 domains span residues 1123–1251 and 1282–1410; these read GANT…LLWH and LPPQ…GKED. Positions 1155, 1161, 1217, and 1219 each coordinate Ca(2+). Lys-1507 bears the N6-acetyllysine mark. C2 domains lie at 1536–1654 and 1772–1920; these read PAPP…SHCG and GPPG…EKCR. The Ca(2+) site is built by Asp-1569, Asp-1575, Asp-1624, Asp-1626, Asp-1891, Ser-1894, and Asp-1897. Ser-1915 carries the phosphoserine modification. The chain crosses the membrane as a helical span at residues 2026–2046; sequence WVIIGLLFLLILLLFVAVLLY. Topologically, residues 2047-2061 are extracellular; that stretch reads SLPNYLSMKIVKPNV.

The protein belongs to the ferlin family. In terms of assembly, interacts with DNM2 and KDR. Interacts with EHD1. Interacts with EHD2; the interaction is direct. Interacts with RIPOR2. Requires Ca(2+) as cofactor. In terms of tissue distribution, expressed in myoblast and endothelial cells (at protein level). Highly expressed in cardiac and skeletal muscles. Also present in lung, and at very low levels in kidney, placenta and brain.

It localises to the cell membrane. It is found in the nucleus membrane. The protein localises to the cytoplasmic vesicle membrane. Calcium/phospholipid-binding protein that plays a role in the plasmalemma repair mechanism of endothelial cells that permits rapid resealing of membranes disrupted by mechanical stress. Involved in endocytic recycling. Implicated in VEGF signal transduction by regulating the levels of the receptor KDR. The protein is Myoferlin (MYOF) of Homo sapiens (Human).